Here is a 389-residue protein sequence, read N- to C-terminus: Histidinol-phosphate aminotransferase (389 aa).

K233 is subject to N6-(pyridoxal phosphate)lysine.

This sequence belongs to the class-II pyridoxal-phosphate-dependent aminotransferase family. Pyridoxal 5'-phosphate is required as a cofactor.

It carries out the reaction L-histidinol phosphate + 2-oxoglutarate = 3-(imidazol-4-yl)-2-oxopropyl phosphate + L-glutamate. Its pathway is amino-acid biosynthesis; L-histidine biosynthesis; L-histidine from 5-phospho-alpha-D-ribose 1-diphosphate: step 7/9. The sequence is that of Histidinol-phosphate aminotransferase (HIS5) from Candida maltosa (Yeast).